We begin with the raw amino-acid sequence, 88 residues long: Small ribosomal subunit protein bS21 (88 aa).

Positions 58–88 (ARKRAQREGLLPMTPRPVAAGGAAGAARPPR) are disordered. A compositionally biased stretch (low complexity) spans 73-88 (RPVAAGGAAGAARPPR).

The protein belongs to the bacterial ribosomal protein bS21 family.

In Mesorhizobium japonicum (strain LMG 29417 / CECT 9101 / MAFF 303099) (Mesorhizobium loti (strain MAFF 303099)), this protein is Small ribosomal subunit protein bS21.